Consider the following 138-residue polypeptide: Transcription antitermination protein NusB (138 aa).

Belongs to the NusB family.

In terms of biological role, involved in transcription antitermination. Required for transcription of ribosomal RNA (rRNA) genes. Binds specifically to the boxA antiterminator sequence of the ribosomal RNA (rrn) operons. The polypeptide is Transcription antitermination protein NusB (Helicobacter pylori (strain G27)).